Consider the following 249-residue polypeptide: Electron transfer flavoprotein subunit beta (249 aa).

This sequence belongs to the ETF beta-subunit/FixA family. In terms of assembly, heterodimer of an alpha and a beta subunit. FAD serves as cofactor. Requires AMP as cofactor.

The electron transfer flavoprotein serves as a specific electron acceptor for other dehydrogenases. It transfers the electrons to the main respiratory chain via ETF-ubiquinone oxidoreductase (ETF dehydrogenase). This is Electron transfer flavoprotein subunit beta (etfB) from Bradyrhizobium diazoefficiens (strain JCM 10833 / BCRC 13528 / IAM 13628 / NBRC 14792 / USDA 110).